The primary structure comprises 455 residues: Homogentisate 1,2-dioxygenase (455 aa).

His308 acts as the Proton acceptor in catalysis. Residues His351 and Glu357 each coordinate Fe cation. The homogentisate site is built by Tyr366 and His387. A Fe cation-binding site is contributed by His387.

It belongs to the homogentisate dioxygenase family. Hexamer; dimer of trimers. Fe cation is required as a cofactor.

It carries out the reaction homogentisate + O2 = 4-maleylacetoacetate + H(+). It participates in amino-acid degradation; L-phenylalanine degradation; acetoacetate and fumarate from L-phenylalanine: step 4/6. In terms of biological role, involved in the catabolism of homogentisate (2,5-dihydroxyphenylacetate or 2,5-OH-PhAc), a central intermediate in the degradation of phenylalanine and tyrosine. Catalyzes the oxidative ring cleavage of the aromatic ring of homogentisate to yield maleylacetoacetate. The protein is Homogentisate 1,2-dioxygenase of Xanthomonas campestris pv. campestris (strain 8004).